The primary structure comprises 178 residues: Conodipine-P3 (178 aa).

The first 24 residues, 1–24 (MKLLAPVLWAMAALGVTWLVAVDS), serve as a signal peptide directing secretion. Residue P38 is modified to 4-hydroxyproline. 4-hydroxyproline; partial is present on residues P42 and P49. H54 is a catalytic residue. A propeptide spans 98 to 130 (KREVTSHRATSIAHSRLWKTALDQKSFLNRKAR) (interchain peptide). Position 131 is a pyrrolidone carboxylic acid (Q131). P137 is modified (4-hydroxyproline; partial).

The protein belongs to the phospholipase A2 family. Group IX subfamily. As to quaternary structure, heterodimer of an alpha and a beta chain; probably disulfide-linked. Ca(2+) serves as cofactor. Expressed by the venom duct.

It localises to the secreted. The enzyme catalyses a 1,2-diacyl-sn-glycero-3-phosphocholine + H2O = a 1-acyl-sn-glycero-3-phosphocholine + a fatty acid + H(+). Catalyzes the calcium-dependent hydrolysis of the 2-acyl groups in 3-sn-phosphoglycerides. The polypeptide is Conodipine-P3 (Conus purpurascens (Purple cone)).